A 595-amino-acid polypeptide reads, in one-letter code: Probable L-gulonolactone oxidase 1 (595 aa).

The signal sequence occupies residues 1-18; that stretch reads MAFWLSLIFFCFCTFASS. The FAD-binding PCMH-type domain maps to 47-229; sequence SICEAAKVEY…SQVTFQLQPM (183 aa).

The protein belongs to the oxygen-dependent FAD-linked oxidoreductase family. The cofactor is FAD.

The catalysed reaction is L-gulono-1,4-lactone + O2 = L-ascorbate + H2O2 + H(+). Its pathway is cofactor biosynthesis; L-ascorbate biosynthesis. Its function is as follows. May be involved in the biosynthesis of ascorbic acid. This Arabidopsis thaliana (Mouse-ear cress) protein is Probable L-gulonolactone oxidase 1.